The chain runs to 251 residues: Maleate isomerase (251 aa).

Substrate is bound by residues N15, 81-83 (CLV), Y138, and N168. The active-site Nucleophile is the C81. C81 is modified (S-(2-succinyl)cysteine). C199 acts as the Proton donor in catalysis. 200 to 201 (VQ) provides a ligand contact to substrate.

Belongs to the maleate isomerase family. Homodimer.

The enzyme catalyses maleate = fumarate. Functionally, catalyzes cis-trans isomerization of the C2-C3 double bond in maleate to yield fumarate. The chain is Maleate isomerase from Geobacillus stearothermophilus (Bacillus stearothermophilus).